Reading from the N-terminus, the 1513-residue chain is DNA topoisomerase 2-binding protein 1-A (1513 aa).

2 BRCT domains span residues Val101–Val189 and Tyr194–Ile283. A disordered region spans residues Ile289–Arg308. BRCT domains lie at Ala354 to His444, Ala530 to Leu621, and Glu629 to Val726. Residues Gln789 to Gly799 are compositionally biased toward polar residues. Positions Gln789–Ser809 are disordered. Positions Pro844–Thr850 match the Nuclear localization signal motif. The region spanning Asp892–His984 is the BRCT 6 domain. 2 disordered regions span residues Glu1031–Val1053 and Ser1086–Arg1109. Ser1131 bears the Phosphoserine mark. 2 consecutive BRCT domains span residues Ser1253–Trp1344 and Ile1383–Leu1480. The short motif at Lys1508–Arg1511 is the Nuclear localization signal element.

Belongs to the TOPBP1 family. Interacts with cdc45. Interacts (via BRCT domains) with ticrr; interaction is cdk2-dependent. Interacts with atr in the presence of atrip. Interacts with recql4 (via N-terminus). Interacts with gmnc. Interacts with cip2a; forming the CIP2A-TOPBP1 complex. Phosphorylation at Ser-1131 is essential for phosphorylation of chek1, and thus for checkpoint regulation.

The protein localises to the nucleus. The protein resides in the chromosome. It localises to the cytoplasm. It is found in the cytoskeleton. Its subcellular location is the microtubule organizing center. The protein localises to the centrosome. The protein resides in the spindle pole. Its function is as follows. Scaffold protein that acts as a key protein-protein adapter in DNA replication and DNA repair. Composed of multiple BRCT domains, which specifically recognize and bind phosphorylated proteins, bringing proteins together into functional combinations. Required for DNA replication initiation but not for the formation of pre-replicative complexes or the elongation stages. Necessary for the loading of replication factors onto chromatin, including gmnc, cdc45, DNA polymerases and components of the GINS complex such as ginsl/sld5. Plays a central role in DNA repair by bridging proteins and promoting recruitment of proteins to DNA damage sites. Involved in double-strand break (DSB) repair via homologous recombination in S-phase by promoting the exchange between the DNA replication factor A (RPA) complex and RAD51. Involved in microhomology-mediated end-joining (MMEJ) DNA repair by promoting recruitment of polymerase theta (POLQ) to DNA damage sites during mitosis. In response to DNA damage, triggers the recruitment of checkpoint signaling proteins on chromatin, which activate the chek1 signaling pathway and block S-phase progression. Increases the kinase activity of atr to numerous substrates, and is required for the phosphorylation of Rad1. Together with cip2a, plays an essential role in the response to genome instability generated by the presence of acentric chromosome fragments derived from shattered chromosomes within micronuclei. The CIP2A-TOPBP1 complex tethers chromosome fragments during mitosis to ensure clustered segregation of the fragments to a single daughter cell nucleus, facilitating re-ligation with limited chromosome scattering and loss. This is DNA topoisomerase 2-binding protein 1-A (topbp1-A) from Xenopus laevis (African clawed frog).